Consider the following 112-residue polypeptide: ATP synthase epsilon chain (112 aa).

This sequence belongs to the ATPase epsilon chain family. As to quaternary structure, F-type ATPases have 2 components, CF(1) - the catalytic core - and CF(0) - the membrane proton channel. CF(1) has five subunits: alpha(3), beta(3), gamma(1), delta(1), epsilon(1). CF(0) has three main subunits: a, b and c.

The protein localises to the cell inner membrane. In terms of biological role, produces ATP from ADP in the presence of a proton gradient across the membrane. The chain is ATP synthase epsilon chain (atpC) from Rickettsia conorii (strain ATCC VR-613 / Malish 7).